A 503-amino-acid polypeptide reads, in one-letter code: Trehalose-6-phosphate synthase (503 aa).

Over residues 1–14 the composition is skewed to polar residues; sequence MTDQSGNGVRSGSA. The interval 1-20 is disordered; that stretch reads MTDQSGNGVRSGSASEAPPS. A D-glucose 6-phosphate-binding site is contributed by arginine 31. A UDP-alpha-D-glucose-binding site is contributed by 51 to 52; the sequence is GG. Residues tyrosine 109 and aspartate 163 each contribute to the D-glucose 6-phosphate site. Residues arginine 305 and lysine 310 each coordinate UDP-alpha-D-glucose. A D-glucose 6-phosphate-binding site is contributed by arginine 343. Residue 408 to 412 coordinates UDP-alpha-D-glucose; it reads LVAKE.

Belongs to the glycosyltransferase 20 family. As to quaternary structure, homotetramer.

It carries out the reaction ADP-alpha-D-glucose + D-glucose 6-phosphate = alpha,alpha-trehalose 6-phosphate + ADP + H(+). The enzyme catalyses CDP-alpha-D-glucose + D-glucose 6-phosphate = alpha,alpha-trehalose 6-phosphate + CDP + H(+). The catalysed reaction is GDP-alpha-D-glucose + D-glucose 6-phosphate = alpha,alpha-trehalose 6-phosphate + GDP + H(+). It catalyses the reaction TDP-alpha-D-glucose + D-glucose 6-phosphate = 5-methyl-UDP + alpha,alpha-trehalose 6-phosphate + H(+). It carries out the reaction D-glucose 6-phosphate + UDP-alpha-D-glucose = alpha,alpha-trehalose 6-phosphate + UDP + H(+). Its pathway is glycan biosynthesis; trehalose biosynthesis. Functionally, probably involved in the osmoprotection via the biosynthesis of trehalose and in the production of glycogen and alpha-glucan via the TreS-Pep2 branch involved in the biosynthesis of maltose-1-phosphate (M1P). Catalyzes the transfer of glucose from UDP-glucose (UDP-Glc) to D-glucose 6-phosphate (Glc-6-P) to form trehalose-6-phosphate. Probably also able to use ADP-Glc, CDP-Glc, GDP-Glc and TDP-Glc as glucosyl donors. The chain is Trehalose-6-phosphate synthase from Mycolicibacterium gilvum (strain PYR-GCK) (Mycobacterium gilvum (strain PYR-GCK)).